The chain runs to 528 residues: MKYALIRKLLFVLRTYMMNVRAILVLDFGSQYSQLIARRIREIGVYTKVIPYYTPLKEIKNMNIAGIILSGGPASVYAKDAPTLNMEIFNLKIPVLGICYGMQLIVKLFGGLVSKDYKQEYGSSEIFLKNEKSLLFSELPNKFQIIMSHGDSIEKIPNNFKQLAFTKNCIASISNEDQKIYGLQFHPEVTHSEFGDQILKNFVFKICQSQTNWSLESNVETIVEKIKLKVGSKKVILGLSGGTDSLVCALLIKKAIKENLICVFVNTGLLRKNEDKKILELKHQYDLNIKYIDASEKFLNYLKNISDPEEKRKIIGKEFVNVFEKITLEDQNIEYLAQGTIYSDVIESKSKNNASSKIKSHHNVGGLPDKMRLKLLEPLNEFFKDEIIQIGINLGIKKEALYRHPFPGPGLAIRIIGEVTQEKINILQEAENILTEELFTNDLYYEIRQAFVVLLPVKSVGVMGDQRTYEYTAVIRCVNTQDFMTAEWTELPYNFLRKVSSRIINEVRGINRVCYDISSKPPSTIEWE.

In terms of domain architecture, Glutamine amidotransferase type-1 spans Ala-22 to Asn-212. Residue Cys-99 is the Nucleophile of the active site. Active-site residues include His-186 and Glu-188. Residues Trp-213–Arg-403 form the GMPS ATP-PPase domain. Ser-240 to Leu-246 contacts ATP.

Homodimer.

The enzyme catalyses XMP + L-glutamine + ATP + H2O = GMP + L-glutamate + AMP + diphosphate + 2 H(+). The protein operates within purine metabolism; GMP biosynthesis; GMP from XMP (L-Gln route): step 1/1. Its function is as follows. Catalyzes the synthesis of GMP from XMP. This is GMP synthase [glutamine-hydrolyzing] from Borrelia garinii subsp. bavariensis (strain ATCC BAA-2496 / DSM 23469 / PBi) (Borreliella bavariensis).